The chain runs to 687 residues: Calcium-binding protein SP84 (687 aa).

The N-terminal stretch at 1–19 is a signal peptide; sequence MMRAIYLLVVVCWAAAANA. 5 EF-hand domains span residues 152–187, 257–292, 406–441, 476–511, and 579–614; these read LESD…HKNK, LTEI…TDDV, KTEA…PHMV, IENA…NNDA, and MTER…VKDL. Ca(2+) contacts are provided by D592, N594, D596, E598, and D603.

As to expression, expressed in salivary glands where expression is strongest in type III cells in the posterior lobe of the principal glands (at protein level). Not expressed in midgut, Malpighian tubules or epidermis.

The protein localises to the secreted. Functionally, binds calcium. During feeding of the phloem sap, protein is injected into sieve tubes of rice plants. This process may suppress the sieve-element clogging and facilitate continuous ingestion from sieve tubes. The polypeptide is Calcium-binding protein SP84 (Nephotettix cincticeps (Green rice leafhopper)).